The following is a 141-amino-acid chain: D-aminoacyl-tRNA deacylase (141 aa).

The short motif at 133–134 (GP) is the Gly-cisPro motif, important for rejection of L-amino acids element.

It belongs to the DTD family. As to quaternary structure, homodimer.

Its subcellular location is the cytoplasm. It catalyses the reaction glycyl-tRNA(Ala) + H2O = tRNA(Ala) + glycine + H(+). It carries out the reaction a D-aminoacyl-tRNA + H2O = a tRNA + a D-alpha-amino acid + H(+). An aminoacyl-tRNA editing enzyme that deacylates mischarged D-aminoacyl-tRNAs. Also deacylates mischarged glycyl-tRNA(Ala), protecting cells against glycine mischarging by AlaRS. Acts via tRNA-based rather than protein-based catalysis; rejects L-amino acids rather than detecting D-amino acids in the active site. By recycling D-aminoacyl-tRNA to D-amino acids and free tRNA molecules, this enzyme counteracts the toxicity associated with the formation of D-aminoacyl-tRNA entities in vivo and helps enforce protein L-homochirality. The chain is D-aminoacyl-tRNA deacylase from Nautilia profundicola (strain ATCC BAA-1463 / DSM 18972 / AmH).